Reading from the N-terminus, the 185-residue chain is Small ribosomal subunit protein bS16 (185 aa).

Residues 83–185 form a disordered region; that stretch reads QWTHGNNPEK…APASEETTEG (103 aa). The segment covering 89–125 has biased composition (basic and acidic residues); that stretch reads NPEKAKPGKKAQERDAERTQRDADRVAAEAQAKEDAK. Low complexity-rich tracts occupy residues 126 to 146 and 159 to 176; these read AAAA…AAAP and VEAA…AEEA.

The protein belongs to the bacterial ribosomal protein bS16 family.

This is Small ribosomal subunit protein bS16 from Caulobacter sp. (strain K31).